Reading from the N-terminus, the 75-residue chain is Penaeidin-3l (75 aa).

The N-terminal stretch at 1-19 is a signal peptide; it reads MRLVVCLVFLASFALVCQG. Q20 carries the post-translational modification Pyrrolidone carboxylic acid. Cystine bridges form between C44–C59, C48–C66, and C60–C67. S74 bears the Serine amide mark.

It belongs to the penaeidin family.

Its subcellular location is the cytoplasmic granule. Antibacterial and antifungal activity. Presents chitin-binding activity. The protein is Penaeidin-3l of Penaeus setiferus (Atlantic white shrimp).